The chain runs to 422 residues: Exodeoxyribonuclease 7 large subunit (422 aa).

It belongs to the XseA family. In terms of assembly, heterooligomer composed of large and small subunits.

The protein resides in the cytoplasm. It catalyses the reaction Exonucleolytic cleavage in either 5'- to 3'- or 3'- to 5'-direction to yield nucleoside 5'-phosphates.. Functionally, bidirectionally degrades single-stranded DNA into large acid-insoluble oligonucleotides, which are then degraded further into small acid-soluble oligonucleotides. The polypeptide is Exodeoxyribonuclease 7 large subunit (Leptospira borgpetersenii serovar Hardjo-bovis (strain JB197)).